Here is a 295-residue protein sequence, read N- to C-terminus: Putative aquaporin-12A (295 aa).

A helical transmembrane segment spans residues 1–21; sequence MAGLNVSLSFFFATFALCEAA. Residues 22–54 lie on the Extracellular side of the membrane; the sequence is RRASKALLPVGAYEVFAREAMRTLVELGPWAGD. A helical transmembrane segment spans residues 55–75; it reads FGPDLLLTLLFLLFLAHGVTL. The Cytoplasmic segment spans residues 76-99; the sequence is DGASANPTVSLQEFLMAEQSLPGT. The segment at residues 77-114 is an intramembrane region (discontinuously helical); the sequence is GASANPTVSLQEFLMAEQSLPGTLLKLAAQGLGMQAAC. An NPA 1 motif is present at residues 81–83; the sequence is NPT. Residues 100 to 126 form a helical membrane-spanning segment; that stretch reads LLKLAAQGLGMQAACTLMRLCWAWELS. Over 127–145 the chain is Extracellular; it reads DLHLLQSLMAQSCSSALRT. A helical transmembrane segment spans residues 146 to 166; that stretch reads SVPHGALVEAACAFCFHLTLL. The Cytoplasmic segment spans residues 167–178; it reads HLRHSPPAYSGP. The chain crosses the membrane as a helical span at residues 179–199; it reads AVALLVTVTAYTAGPFTSAFF. An intramembrane region (discontinuously helical) is located at residues 195–206; the sequence is TSAFFNPALAAS. The NPA 2 signature appears at 200 to 202; that stretch reads NPA. Topologically, residues 200–215 are extracellular; the sequence is NPALAASVTFACSGHT. A helical transmembrane segment spans residues 216 to 236; it reads LLEYVQVYWLGPLTGMVLAVL. At 237–295 the chain is on the cytoplasmic side; that stretch reads LHQGRLPHLFQRNLFYGQKNKYRAPRGKPAPASGDTQTPAKGSSVREPGRSGVEGPHSS. The disordered stretch occupies residues 257-295; that stretch reads KYRAPRGKPAPASGDTQTPAKGSSVREPGRSGVEGPHSS.

Belongs to the MIP/aquaporin (TC 1.A.8) family. AQP11/AQP12 subfamily. Homotetramer; each monomer provides an independent water pore. As to expression, restricted to the pancreas.

It localises to the membrane. It carries out the reaction H2O(in) = H2O(out). Putative aquaporin. Could form homotetrameric transmembrane channels, with each monomer independently mediating water transport across the plasma membrane along its osmotic gradient. The protein is Putative aquaporin-12A of Homo sapiens (Human).